Consider the following 65-residue polypeptide: uncharacterized protein (65 aa).

The protein localises to the plastid. Its subcellular location is the chloroplast. This is an uncharacterized protein from Guillardia theta (Cryptophyte).